Consider the following 342-residue polypeptide: Galactose mutarotase (342 aa).

S14 bears the Phosphoserine mark. Residues 81–82 (NR), H107, 176–178 (HSY), D243, Q279, and E307 contribute to the beta-D-galactose site. The active-site Proton donor is H176. E307 serves as the catalytic Proton acceptor.

This sequence belongs to the aldose epimerase family. As to quaternary structure, monomer.

The protein resides in the cytoplasm. The enzyme catalyses alpha-D-galactose = beta-D-galactose. It carries out the reaction alpha-D-glucose = beta-D-glucose. Its pathway is carbohydrate metabolism; hexose metabolism. It functions in the pathway carbohydrate metabolism; galactose metabolism. Its function is as follows. Mutarotase that catalyzes the interconversion of beta-D-galactose and alpha-D-galactose during galactose metabolism. Beta-D-galactose is metabolized in the liver into glucose 1-phosphate, the primary metabolic fuel, by the action of four enzymes that constitute the Leloir pathway: GALM, GALK1 (galactokinase), GALT (galactose-1-phosphate uridylyltransferase) and GALE (UDP-galactose-4'-epimerase). Involved in the maintenance of the equilibrium between the beta- and alpha-anomers of galactose, therefore ensuring a sufficient supply of the alpha-anomer for GALK1. Also active on D-glucose although shows a preference for galactose over glucose. The polypeptide is Galactose mutarotase (Mus musculus (Mouse)).